The primary structure comprises 55 residues: Large ribosomal subunit protein eL37 (55 aa).

The Zn(2+) site is built by cysteine 20, cysteine 23, cysteine 35, and cysteine 38. A C4-type zinc finger spans residues 20 to 38 (CRRCGKNSYHKRHHRCSSC).

Belongs to the eukaryotic ribosomal protein eL37 family. Zn(2+) serves as cofactor.

Its function is as follows. Binds to the 23S rRNA. This is Large ribosomal subunit protein eL37 from Cenarchaeum symbiosum (strain A).